Here is a 507-residue protein sequence, read N- to C-terminus: Alkyl hydroperoxide reductase subunit F (507 aa).

207 to 222 (DVLIVGGGPASGSAAI) is an FAD binding site. A disulfide bond links C335 and C338. Residue 347–361 (DVAVIGGGNSGVEAA) participates in NAD(+) binding. FAD is bound at residue 467–477 (TNVPGIFAAGD).

The protein belongs to the class-II pyridine nucleotide-disulfide oxidoreductase family. In terms of assembly, homodimer. The cofactor is FAD.

In terms of biological role, serves to protect the cell against DNA damage by alkyl hydroperoxides. It can use either NADH or NADPH as electron donor for direct reduction of redox dyes or of alkyl hydroperoxides when combined with the AhpC protein. This is Alkyl hydroperoxide reductase subunit F (ahpF) from Staphylococcus epidermidis (strain ATCC 35984 / DSM 28319 / BCRC 17069 / CCUG 31568 / BM 3577 / RP62A).